The chain runs to 57 residues: Large ribosomal subunit protein bL32 (57 aa).

A compositionally biased stretch (basic residues) spans 1-20 (MAVPKKKTSKGKRNQRHAVW). The tract at residues 1–23 (MAVPKKKTSKGKRNQRHAVWKAK) is disordered.

Belongs to the bacterial ribosomal protein bL32 family.

This is Large ribosomal subunit protein bL32 from Prochlorococcus marinus (strain SARG / CCMP1375 / SS120).